The primary structure comprises 298 residues: tRNA dimethylallyltransferase 2 (298 aa).

Gly10–Thr17 contacts ATP. Thr12–Thr17 lines the substrate pocket. Residues Asp35–Gln38 are interaction with substrate tRNA.

The protein belongs to the IPP transferase family. In terms of assembly, monomer. Mg(2+) is required as a cofactor.

It carries out the reaction adenosine(37) in tRNA + dimethylallyl diphosphate = N(6)-dimethylallyladenosine(37) in tRNA + diphosphate. Catalyzes the transfer of a dimethylallyl group onto the adenine at position 37 in tRNAs that read codons beginning with uridine, leading to the formation of N6-(dimethylallyl)adenosine (i(6)A). The sequence is that of tRNA dimethylallyltransferase 2 from Syntrophotalea carbinolica (strain DSM 2380 / NBRC 103641 / GraBd1) (Pelobacter carbinolicus).